The chain runs to 365 residues: S-type anion channel SLAH4 (365 aa).

Topologically, residues 1-25 (MEIPSQEIHIMIDNTISRRKERKTN) are cytoplasmic. The chain crosses the membrane as a helical span at residues 26–46 (LADAEPIVLMSVLSSLHAGYF). The Extracellular portion of the chain corresponds to 47-73 (RISLSLCSQALLWKIMVHLHSELPSMA). Residues 74-94 (YYLLWYLALATQVSLCFLYAF) traverse the membrane as a helical segment. The Cytoplasmic portion of the chain corresponds to 95-106 (KCIFLFDMVKEE). A helical transmembrane segment spans residues 107–127 (FSHYIGVNYLYAPSISCLLLL). The Extracellular portion of the chain corresponds to 128–131 (QSAP). Residues 132–152 (MIEPHSVLYQTLFWIFAVPVL) form a helical membrane-spanning segment. The Cytoplasmic segment spans residues 153–168 (TLDTKLYGQWFTTEKR). A helical membrane pass occupies residues 169–189 (FLSIMANPASQVSVIANLVAA). Residues 190-199 (RGAAEMGWKE) lie on the Extracellular side of the membrane. Residues 200–220 (CALCLFSLGMVHYLVIFVTLY) traverse the membrane as a helical segment. Residues 221 to 235 (QRLPGGNNFPTTLRP) are Cytoplasmic-facing. Residues 236-256 (VFFLFFAAPATASLAWNSICG) form a helical membrane-spanning segment. Residue N257 is a topological domain, extracellular. Residues 258-278 (FDTIAKMLFFLSLFIFISLVC) traverse the membrane as a helical segment. Residues 279–291 (RPNLLKKSIKRFN) lie on the Cytoplasmic side of the membrane. Residues 292–312 (VAWWAYSFPITFLALNSVQYA) form a helical membrane-spanning segment. Over 313 to 321 (QEVKDHVAS) the chain is Extracellular. Residues 322–342 (VLMFIFSSMSVLIFISVMLLT) traverse the membrane as a helical segment. Residues 343–365 (AANSKRLLRRDHVLWSSTGPKDK) are Cytoplasmic-facing.

Belongs to the SLAC1 S-type anion channel family. As to quaternary structure, homotrimer.

It localises to the cell membrane. Slow, weak voltage-dependent S-type anion efflux channel involved in maintenance of anion homeostasis. This chain is S-type anion channel SLAH4 (SLAH4), found in Arabidopsis thaliana (Mouse-ear cress).